The following is a 463-amino-acid chain: NEDD8-activating enzyme E1 catalytic subunit (463 aa).

Position 2 is an N-acetylalanine (Ala2). An interaction with UBE2M N-terminus region spans residues 53 to 70; sequence HPDFEPSTESLQFLLDTC. Residues 100–124 and 148–171 each bind ATP; these read DMDT…GRPK and IQDF…SIIA. 2 interaction with UBE2M N-terminus regions span residues 157–161 and 192–217; these read RQFHI and PSSI…LPGM. Residues 227–229 form an interaction with NEDD8 region; that stretch reads LYP. Catalysis depends on Cys237, which acts as the Glycyl thioester intermediate. Interaction with NAE1 stretches follow at residues 242–248 and 292–295; these read MPRLPEH and YNIR. Residues 331–338 are interaction with UBE2M N-terminus; it reads IATSAYIP. Residues 352–357 form an interaction with NEDD8 region; the sequence is YTYTFE. The interval 368–463 is interaction with UBE2M core domain; that stretch reads SQLPQNIQFS…TVLFKLHFTS (96 aa).

Belongs to the ubiquitin-activating E1 family. UBA3 subfamily. In terms of assembly, heterodimer of UBA3 and NAE1. Interacts with NEDD8, UBE2F and UBE2M. Binds ESR1 and ESR2 with bound steroid ligand. Interacts with TBATA. In terms of tissue distribution, ubiquitously expressed.

It carries out the reaction ATP + [NEDD8 protein] + [E1 NEDD8-activating enzyme]-L-cysteine = AMP + diphosphate + [E1 NEDD8-activating enzyme]-S-[NEDD8 protein]-yl-L-cysteine.. It functions in the pathway protein modification; protein neddylation. Its activity is regulated as follows. Binding of TP53BP2 to the regulatory subunit NAE1 decreases activity. Functionally, catalytic subunit of the dimeric UBA3-NAE1 E1 enzyme. E1 activates NEDD8 by first adenylating its C-terminal glycine residue with ATP, thereafter linking this residue to the side chain of the catalytic cysteine, yielding a NEDD8-UBA3 thioester and free AMP. E1 finally transfers NEDD8 to the catalytic cysteine of UBE2M. Down-regulates steroid receptor activity. Necessary for cell cycle progression. This Homo sapiens (Human) protein is NEDD8-activating enzyme E1 catalytic subunit (UBA3).